The primary structure comprises 1146 residues: MIKAIFDTLCPNCGGEISAERLLKGLPCEKCLPEEVNREEVCQKLENGSFKEFCELLSELKDWEDFFKEILGTSPWSLQKSWARKVFLGRSFAMLAPTGVGKTTFGLSMASYLAKQGKKSYIILPTQLLVEQVSERIKTFGVDEDRLIVWGKLSEKKKKELKERIQKGDFDILITTSMFLYKNYEILPKDFSFIFVDDVDSFLKTAKNVDKVLYLLGFSEEDIHKAFELIRLKEKPNKSEEDWEEIKKRSEELREIAKKKKGVLAVSSATGNPRSNRIKLFRELLGFEVGKPSVLLRNIVETYEETQNLKETLLKRVKEFGKGGLVFVSSDYGREAVEEVKKFLESHGVKAVTYEEDLKLFEKGEAQVAIGISSFKNPLARGIDLPHVVRYAIFYGVPKIRVPLKVETSVSHLLWALLSLRPIILKDEKLKSEVKKVDTWIQRLRRYSFLSDDFVEERPDLKDRIENLRKEVQEFLLREDIVEKIKNSEELTLRLGEEGFELVVADVTGYLQASGRTSRMYAGGLTKGLSHVLVDDRRAFKNLEKKVRWFNQDINFKKIEEVDLKEVLREIDEDRKKVREILEGKVKAEQKEHVKPVLVVVESPNKARTIANFFGKPMGRKIGGIDVLEVMVGDLYIMITASLGHVFDLVKDKEFHGVIAKNGEYVPIYEVIEGKENIVKGLRELAQEVDTVLIGTDPDTEGEKIGWDLGALLSPYIPNVERIEFHEVTRKAIKHAVENPRDFNENLVKAQLVRRIADRWVGFEVSRIVQQAFDKHWLSGGRVQIPVLGWIIEREKLYRKKKHVVQITFKENGRWLRLGFEFQDKKEAKEFYENLKEIDVEVLEEREELKNPPPPFTTDTMLKEASDRYRISVPKLMQLAQELFEYGLITYHRTDSTRVSDVGIGVAKEWISEELGKELFYPRVWGEGGAHECIRPTKPLDVEDLRSMMLAGQLQNLTREHLLLYELIFKRFMASQMKPVKVKTKKVKVKALGREQELILTTEILEEGFNKVYPLELQPDLKGSVYVEDKKELKSVPMAYLYTQGSLVEEMKRRGIGRPSTYATIVSKLLERGYVIERHGFLIPTKLGKQVYEFLKSREKIMPFVSEEFTRKLEELMDKVEEGKEDYLQVLDELYKKVNEFEKANV.

An RG N-terminal-type zinc finger spans residues 1–38 (MIKAIFDTLCPNCGGEISAERLLKGLPCEKCLPEEVNR). Zn(2+) contacts are provided by Cys10, Cys13, Cys28, and Cys31. ATP-binding positions include Gln79 and 96 to 103 (APTGVGKT). The Helicase ATP-binding domain maps to 83 to 240 (ARKVFLGRSF…RLKEKPNKSE (158 aa)). The DEAD box motif lies at 197-200 (DDVD). Positions 412–565 (HLLWALLSLR…FKKIEEVDLK (154 aa)) constitute a Helicase C-terminal domain. The interval 592 to 1146 (EHVKPVLVVV…KVNEFEKANV (555 aa)) is topoisomerase I. Residues 596–728 (PVLVVVESPN…NVERIEFHEV (133 aa)) enclose the Toprim domain. Positions 602 and 697 each coordinate Mg(2+). Positions 744–1142 (NENLVKAQLV…ELYKKVNEFE (399 aa)) constitute a Topo IA-type catalytic domain. The active-site O-(5'-phospho-DNA)-tyrosine intermediate is the Tyr891.

The protein in the N-terminal section; belongs to the DEAD box helicase family. DDVD subfamily. It in the C-terminal section; belongs to the type IA topoisomerase family. As to quaternary structure, monomer. Requires Zn(2+) as cofactor. Mg(2+) serves as cofactor.

Its subcellular location is the cytoplasm. The catalysed reaction is ATP + H2O = ADP + phosphate + H(+). Functionally, modifies the topological state of DNA by introducing positive supercoils in an ATP-dependent process, increasing the linking number in steps of +1. Binds to single-stranded DNA, transiently cleaves and then rejoins the ends, introducing a positive supercoil in the process. The scissile phosphodiester is attacked by the catalytic tyrosine of the enzyme, resulting in the formation of a DNA-(5'-phosphotyrosyl)-enzyme intermediate. Probably involved in rewinding DNA strands in regions of the chromosome that have opened up to allow replication, transcription, DNA repair and/or for DNA protection. The sequence is that of Reverse gyrase 1 from Aquifex aeolicus (strain VF5).